Reading from the N-terminus, the 389-residue chain is MSQYSFTSESVSEGHPDKIADQISDAILDSILAQDPRARVACETYVKTGIVIMGGEITTTAWVNMEEIARNTIRDIGYVHSDMGFDANSCVILSVINKQSSDIQYSIDHGNTSTLQRGAGDQGLMFGYATNETSVFMPAPITYAHRLIKRKSQVRKSGVLPWLGLDAKSQVTVAYEHGKIIGITAVVLSIQHACDIKLTDLKEAAMEEIIKPVLPNKWLTNNTIFLINPGGRFVIGGPISDCGLTGRKIIVDTYGGIGRHGGGSFSGKDPSKVDRSAAYGARYVAKNIVAAGLADRCELQVSYAIGVPHPISMSIETFGTEKISHDILMQLIKNFFDFRPYGLIAMLDLLRPIYKETAVYGHFGRECFPWEKIDKADLLRDAAGLKCTP.

Residue His15 coordinates ATP. A Mg(2+)-binding site is contributed by Asp17. A K(+)-binding site is contributed by Glu43. L-methionine-binding residues include Glu56 and Gln99. Residues 99–109 (QSSDIQYSIDH) form a flexible loop region. ATP contacts are provided by residues 166–168 (DAK), 232–233 (RF), Asp241, 247–248 (RK), Ser264, and Lys268. Residue Asp241 coordinates L-methionine. Lys272 serves as a coordination point for L-methionine.

Belongs to the AdoMet synthase family. In terms of assembly, homotetramer; dimer of dimers. Mg(2+) serves as cofactor. Requires K(+) as cofactor.

It localises to the cytoplasm. It carries out the reaction L-methionine + ATP + H2O = S-adenosyl-L-methionine + phosphate + diphosphate. It functions in the pathway amino-acid biosynthesis; S-adenosyl-L-methionine biosynthesis; S-adenosyl-L-methionine from L-methionine: step 1/1. Functionally, catalyzes the formation of S-adenosylmethionine (AdoMet) from methionine and ATP. The overall synthetic reaction is composed of two sequential steps, AdoMet formation and the subsequent tripolyphosphate hydrolysis which occurs prior to release of AdoMet from the enzyme. The chain is S-adenosylmethionine synthase from Blochmanniella pennsylvanica (strain BPEN).